Here is a 589-residue protein sequence, read N- to C-terminus: Deoxynucleoside triphosphate triphosphohydrolase SAMHD1 (589 aa).

N-acetylmethionine is present on methionine 1. Over residues 1–10 (MQSADSQNTP) the composition is skewed to polar residues. The disordered stretch occupies residues 1–41 (MQSADSQNTPKRPRRDGSPRTPPDSPLADAETSPSHDLDPD). At serine 18 the chain carries Phosphoserine. Threonine 21 is subject to Phosphothreonine. 2 positions are modified to phosphoserine: serine 33 and serine 88. The SAM domain occupies 45-100 (WGPEQVWSFLRRCGFSDSELLKRCREKRMSGSLLPFPEDLGISSHGKKMKLLNCIQ). GTP is bound by residues lysine 104 and valine 105. Asparagine 107 contacts dGTP. Positions 125, 130, and 133 each coordinate GTP. DGTP contacts are provided by glutamine 137, leucine 138, valine 144, and arginine 152. Residue glutamine 137 participates in dATP binding. DCTP is bound at residue glutamine 137. DTTP is bound at residue glutamine 137. Residue arginine 152 coordinates dATP. Arginine 152 contributes to the dCTP binding site. Arginine 152 lines the dTTP pocket. Residues 152-277 (RFEHSLGVGY…IKDASKWLYK (126 aa)) form the HD domain. Mn(2+) contacts are provided by histidine 155, histidine 194, and aspartate 195. DATP-binding residues include histidine 198 and histidine 203. Residues histidine 198 and histidine 203 each coordinate dCTP. 2 residues coordinate dTTP: histidine 198 and histidine 203. Histidine 221 is an active-site residue. Residue aspartate 300 coordinates Mn(2+). The dGTP site is built by lysine 301, tyrosine 304, aspartate 308, arginine 322, arginine 341, lysine 343, asparagine 347, arginine 355, tyrosine 363, glutamine 364, histidine 365, and lysine 366. Residues lysine 301, tyrosine 304, and aspartate 308 each contribute to the dATP site. DCTP contacts are provided by lysine 301, tyrosine 304, and aspartate 308. Positions 301, 304, and 308 each coordinate dTTP. Position 355 (arginine 355) interacts with dATP. Arginine 355 serves as a coordination point for dCTP. Residue glutamine 364 coordinates dATP. Residue glutamine 364 coordinates dCTP. Glutamine 364 provides a ligand contact to dTTP. Arginine 440 and lysine 444 together coordinate GTP. Lysine 457 participates in a covalent cross-link: Glycyl lysine isopeptide (Lys-Gly) (interchain with G-Cter in SUMO2). Lysine 512 contacts GTP. Lysine 512 is a dGTP binding site.

The protein belongs to the SAMHD1 family. As to quaternary structure, homodimer; in absence of GTP and dNTP. Homotetramer; in GTP- and dNTP-bound form. Interacts with MRE11; leading to stimulate the exonuclease activity of MRE11. Interacts with RBBP8/CtIP. Interacts (via its C-terminus) with CD81. The cofactor is Zn(2+).

It is found in the nucleus. The protein resides in the chromosome. It carries out the reaction a 2'-deoxyribonucleoside 5'-triphosphate + H2O = a 2'-deoxyribonucleoside + triphosphate + H(+). The enzyme catalyses dATP + H2O = 2'-deoxyadenosine + triphosphate + H(+). It catalyses the reaction dCTP + H2O = 2'-deoxycytidine + triphosphate + H(+). The catalysed reaction is dGTP + H2O = 2'-deoxyguanosine + triphosphate + H(+). It carries out the reaction dTTP + H2O = thymidine + triphosphate + H(+). With respect to regulation, allosterically activated and regulated via the combined actions of GTP and dNTPs (dATP, dGTP, dTTP and dCTP): Allosteric site 1 binds GTP, while allosteric site 2 binds dNTP. Allosteric activation promotes the formation of highly active homotetramers. Functionally, protein that acts both as a host restriction factor involved in defense response to virus and as a regulator of DNA end resection at stalled replication forks. Has deoxynucleoside triphosphate (dNTPase) activity, which is required to restrict infection by viruses: dNTPase activity reduces cellular dNTP levels to levels too low for retroviral reverse transcription to occur, blocking early-stage virus replication in dendritic and other myeloid cells. Likewise, suppresses LINE-1 retrotransposon activity. In addition to virus restriction, dNTPase activity acts as a regulator of DNA precursor pools by regulating dNTP pools. Functions during S phase at stalled DNA replication forks to promote the resection of gapped or reversed forks: acts by stimulating the exonuclease activity of MRE11, activating the ATR-CHK1 pathway and allowing the forks to restart replication. Its ability to promote degradation of nascent DNA at stalled replication forks is required to prevent induction of type I interferons, thereby preventing chronic inflammation. Ability to promote DNA end resection at stalled replication forks is independent of dNTPase activity. Enhances immunoglobulin hypermutation in B-lymphocytes by promoting transversion mutation. The polypeptide is Deoxynucleoside triphosphate triphosphohydrolase SAMHD1 (Bos taurus (Bovine)).